A 372-amino-acid polypeptide reads, in one-letter code: Non-structural protein NS2 (372 aa).

The tract at residues 259–326 is disordered; that stretch reads NQIEKQHTTH…QESEPESPSF (68 aa). Residues 299–309 show a composition bias toward low complexity; that stretch reads TETTSTSSSHH.

This chain is Non-structural protein NS2 (NS), found in Aedes albopictus (Asian tiger mosquito).